The sequence spans 57 residues: Ribulose bisphosphate carboxylase large chain (57 aa).

A propeptide spanning residues Met-1–Ser-2 is cleaved from the precursor. Pro-3 carries the N-acetylproline modification. Residue Lys-14 is modified to N6,N6,N6-trimethyllysine.

Belongs to the RuBisCO large chain family. Type I subfamily. Heterohexadecamer of 8 large chains and 8 small chains.

Its subcellular location is the plastid. It is found in the chloroplast. The catalysed reaction is 2 (2R)-3-phosphoglycerate + 2 H(+) = D-ribulose 1,5-bisphosphate + CO2 + H2O. It carries out the reaction D-ribulose 1,5-bisphosphate + O2 = 2-phosphoglycolate + (2R)-3-phosphoglycerate + 2 H(+). Its function is as follows. RuBisCO catalyzes two reactions: the carboxylation of D-ribulose 1,5-bisphosphate, the primary event in carbon dioxide fixation, as well as the oxidative fragmentation of the pentose substrate in the photorespiration process. Both reactions occur simultaneously and in competition at the same active site. The sequence is that of Ribulose bisphosphate carboxylase large chain (rbcL) from Buxus sempervirens (Common box).